We begin with the raw amino-acid sequence, 488 residues long: Proline--tRNA ligase (488 aa).

This sequence belongs to the class-II aminoacyl-tRNA synthetase family. ProS type 3 subfamily. In terms of assembly, homodimer.

Its subcellular location is the cytoplasm. It catalyses the reaction tRNA(Pro) + L-proline + ATP = L-prolyl-tRNA(Pro) + AMP + diphosphate. Its function is as follows. Catalyzes the attachment of proline to tRNA(Pro) in a two-step reaction: proline is first activated by ATP to form Pro-AMP and then transferred to the acceptor end of tRNA(Pro). This is Proline--tRNA ligase from Borrelia garinii subsp. bavariensis (strain ATCC BAA-2496 / DSM 23469 / PBi) (Borreliella bavariensis).